The sequence spans 223 residues: Urease accessory protein UreF (223 aa).

It belongs to the UreF family. As to quaternary structure, ureD, UreF and UreG form a complex that acts as a GTP-hydrolysis-dependent molecular chaperone, activating the urease apoprotein by helping to assemble the nickel containing metallocenter of UreC. The UreE protein probably delivers the nickel.

It is found in the cytoplasm. Its function is as follows. Required for maturation of urease via the functional incorporation of the urease nickel metallocenter. This is Urease accessory protein UreF from Rhizobium johnstonii (strain DSM 114642 / LMG 32736 / 3841) (Rhizobium leguminosarum bv. viciae).